The following is a 203-amino-acid chain: ATP-dependent Clp protease proteolytic subunit (203 aa).

S107 functions as the Nucleophile in the catalytic mechanism. H132 is a catalytic residue.

It belongs to the peptidase S14 family. Fourteen ClpP subunits assemble into 2 heptameric rings which stack back to back to give a disk-like structure with a central cavity, resembling the structure of eukaryotic proteasomes.

Its subcellular location is the cytoplasm. It carries out the reaction Hydrolysis of proteins to small peptides in the presence of ATP and magnesium. alpha-casein is the usual test substrate. In the absence of ATP, only oligopeptides shorter than five residues are hydrolyzed (such as succinyl-Leu-Tyr-|-NHMec, and Leu-Tyr-Leu-|-Tyr-Trp, in which cleavage of the -Tyr-|-Leu- and -Tyr-|-Trp bonds also occurs).. Functionally, cleaves peptides in various proteins in a process that requires ATP hydrolysis. Has a chymotrypsin-like activity. Plays a major role in the degradation of misfolded proteins. This is ATP-dependent Clp protease proteolytic subunit from Shewanella halifaxensis (strain HAW-EB4).